Reading from the N-terminus, the 95-residue chain is MSDQITYNPGAVSDFASDVGSRAGQLHMIYEDTASKTNALQEFFAGHGAQGFFDAQAQMLSGLQGLIETVGQHGTTTGHVLDNAIGTDQAIAGLF.

Belongs to the WXG100 family. ESAT-6 subfamily.

Its subcellular location is the secreted. In Mycobacterium tuberculosis (strain CDC 1551 / Oshkosh), this protein is ESAT-6-like protein EsxC.